Here is a 176-residue protein sequence, read N- to C-terminus: Adenine phosphoribosyltransferase (176 aa).

This sequence belongs to the purine/pyrimidine phosphoribosyltransferase family. As to quaternary structure, homodimer.

The protein resides in the cytoplasm. The catalysed reaction is AMP + diphosphate = 5-phospho-alpha-D-ribose 1-diphosphate + adenine. It participates in purine metabolism; AMP biosynthesis via salvage pathway; AMP from adenine: step 1/1. Its function is as follows. Catalyzes a salvage reaction resulting in the formation of AMP, that is energically less costly than de novo synthesis. The protein is Adenine phosphoribosyltransferase of Bacteroides thetaiotaomicron (strain ATCC 29148 / DSM 2079 / JCM 5827 / CCUG 10774 / NCTC 10582 / VPI-5482 / E50).